The primary structure comprises 704 residues: Tryptophan synthase (704 aa).

Residues 1-292 are tryptophan synthase alpha chain; that stretch reads MEAIKKVFEQ…QLTPNAETAK (292 aa). Catalysis depends on proton acceptor residues E49 and D60. Positions 293–704 are tryptophan synthase beta chain; it reads GVENILPARF…HVSSNAIPSK (412 aa). N6-(pyridoxal phosphate)lysine is present on K380.

It in the N-terminal section; belongs to the TrpA family. This sequence in the C-terminal section; belongs to the TrpB family. Requires pyridoxal 5'-phosphate as cofactor.

It catalyses the reaction (1S,2R)-1-C-(indol-3-yl)glycerol 3-phosphate + L-serine = D-glyceraldehyde 3-phosphate + L-tryptophan + H2O. Its pathway is amino-acid biosynthesis; L-tryptophan biosynthesis; L-tryptophan from chorismate: step 5/5. The chain is Tryptophan synthase (TRP-1) from Coprinopsis cinerea (strain Okayama-7 / 130 / ATCC MYA-4618 / FGSC 9003) (Inky cap fungus).